Here is a 250-residue protein sequence, read N- to C-terminus: Probable aquaporin TIP-type (250 aa).

The next 2 membrane-spanning stretches (helical) occupy residues 22–42 (AGLAEFISTFIFVFAGSGSGI) and 56–76 (AGLISASIAHAFALFVAVSVG). Residues 85–87 (NPA) carry the NPA 1 motif. Transmembrane regions (helical) follow at residues 104–124 (IVYIIAQLLGSIVASALLVFV), 138–158 (VGVGPALVLEIVMTFGLVYTV), and 170–190 (IGIIAPIAIGFIVGANILVGG). Residues 198–200 (NPA) carry the NPA 2 motif. Residues 218-238 (YWAGPLIGGGIAGLVYEVLFI) traverse the membrane as a helical segment.

Belongs to the MIP/aquaporin (TC 1.A.8) family. TIP (TC 1.A.8.10) subfamily.

The protein localises to the membrane. Its function is as follows. Aquaporins facilitate the transport of water and small neutral solutes across cell membranes. May have a role in buffering osmotic fluctations in the highly compartmented vacuole of arbuscule cells. The sequence is that of Probable aquaporin TIP-type (AQP1) from Medicago truncatula (Barrel medic).